The primary structure comprises 562 residues: MLNFLPGNPQDLKPKITVIGVGGAGGNAVNNMIASRLEGVEFIVANTDAQAINQSRTERRVQLGTTVAQGLGAGSRPEIGRAAAEESLEEVIGQIAGANMVFITAGMGGGTGSGAAPVIARAARDHGILTVGVVTKPFHFEGAHRMRTAEGAIEELSQYVDTLIIIPNQNLFRVATERTTFADAFKMADDVLYSGVRGVTDLMIMPGLINLDFADIRTVMSEMGKAMMGTGEAEGDKRAIEAAEAAISNPLLDDTSMKGAKGVLINITGGMDMTLFEVDEAANRIRDEVDPEANIIFGSTFDEKLNGKMRVSVVATGIASEAAAQPKPTVVSLNTPQAQPQPRVAAGGTAGAGFRPAVVTAQAAPAAAVAVAQAQPQMEARTVAQPAPQPAHQPVVTAQVRVQPAAARPAQQPMAETFRPDPQLRLDPVLERPVPATTSLQADFRADPDMGHLSQAVSHIAETAQAAPQPQRQPEIQRQQAPQPQRQPEPEARRSGGLFGLLRRPAAAQPAPQPQRHEPAPMAQQPRQEPARMGNMATRSEPSVARAGEDLDIPAFLRRQAN.

GTP is bound by residues 23 to 27, 110 to 112, Glu141, Arg145, and Asp189; these read GAGGN and GTG. Residues 404 to 413 show a composition bias toward low complexity; sequence PAAARPAQQP. Disordered regions lie at residues 404–428 and 462–562; these read PAAARPAQQPMAETFRPDPQLRLDP and ETAQ…RQAN. Positions 418–428 are enriched in basic and acidic residues; the sequence is FRPDPQLRLDP. Composition is skewed to low complexity over residues 464 to 486 and 500 to 510; these read AQAAPQPQRQPEIQRQQAPQPQR and GLLRRPAAAQP.

It belongs to the FtsZ family. As to quaternary structure, homodimer. Polymerizes to form a dynamic ring structure in a strictly GTP-dependent manner. Interacts directly with several other division proteins. Interacts with FtsZ-like protein (also called FtsZm).

Its subcellular location is the cytoplasm. Functionally, essential cell division protein that forms a contractile ring structure (Z ring) at the future cell division site. The regulation of the ring assembly controls the timing and the location of cell division. One of the functions of the FtsZ ring is to recruit other cell division proteins to the septum to produce a new cell wall between the dividing cells. Binds GTP and shows GTPase activity. Mild overexpression impairs cell division, leading to very elongated cells. Isolated protein forms filaments and bundles in the presence of GTP. This is Cell division protein FtsZ from Magnetospirillum gryphiswaldense (strain DSM 6361 / JCM 21280 / NBRC 15271 / MSR-1).